Reading from the N-terminus, the 239-residue chain is Tetratricopeptide repeat protein 9B (239 aa).

Disordered stretches follow at residues 1 to 57 (MQRG…LGAA) and 99 to 126 (QGAR…SEEQ). 2 positions are modified to phosphoserine: serine 7 and serine 27. A compositionally biased stretch (pro residues) spans 16–31 (PEPPPRPPPALSPPGS). The stretch at 65-99 (AVAFKAEGQRCYREKKFREAIGKYHRALLQLKAAQ) is one TPR 1 repeat. Pro residues predominate over residues 106–116 (LPAPAPGPTSS). The stretch at 171–204 (FKATYRAGIAFYHLGDYARALRYLQEARSREPTD) is one TPR 2 repeat.

Belongs to the TTC9 family.

The chain is Tetratricopeptide repeat protein 9B (TTC9B) from Homo sapiens (Human).